Consider the following 724-residue polypeptide: Protein BCH1 (724 aa).

Residues 51–65 (TTATASANDNGATSN) show a composition bias toward low complexity. The interval 51–71 (TTATASANDNGATSNINGQDP) is disordered. The segment at 711-724 (LNFLKNFTNDTFDN) is CHS5-binding.

The protein belongs to the CHAPS family. Component of the CHS5/6 complex composed of the 4 CHAPS proteins BCH1, BCH2, BUD7, and CHS6 as well as at least CHS5 and GTP-bound ARF1. The complex interacts with the cargo protein CHS3.

The protein localises to the golgi apparatus. Its subcellular location is the trans-Golgi network membrane. Functionally, member of the CHS5-ARF1P-binding proteins (CHAPS) which mediates export of specific cargo proteins, including chitin synthase CHS3. The protein is Protein BCH1 (BCH1) of Saccharomyces cerevisiae (strain ATCC 204508 / S288c) (Baker's yeast).